Reading from the N-terminus, the 213-residue chain is Pyridoxine/pyridoxamine 5'-phosphate oxidase (213 aa).

Substrate is bound by residues 8–11 (RKNY) and lysine 66. Residues 61–66 (RIVLIK), 76–77 (FT), arginine 82, lysine 83, and glutamine 105 contribute to the FMN site. Tyrosine 123, arginine 127, and serine 131 together coordinate substrate. Residues 140–141 (QS) and tryptophan 184 contribute to the FMN site. 190–192 (RLH) contacts substrate. Arginine 194 lines the FMN pocket.

It belongs to the pyridoxamine 5'-phosphate oxidase family. Homodimer. FMN is required as a cofactor.

The catalysed reaction is pyridoxamine 5'-phosphate + O2 + H2O = pyridoxal 5'-phosphate + H2O2 + NH4(+). It catalyses the reaction pyridoxine 5'-phosphate + O2 = pyridoxal 5'-phosphate + H2O2. Its pathway is cofactor metabolism; pyridoxal 5'-phosphate salvage; pyridoxal 5'-phosphate from pyridoxamine 5'-phosphate: step 1/1. It functions in the pathway cofactor metabolism; pyridoxal 5'-phosphate salvage; pyridoxal 5'-phosphate from pyridoxine 5'-phosphate: step 1/1. Functionally, catalyzes the oxidation of either pyridoxine 5'-phosphate (PNP) or pyridoxamine 5'-phosphate (PMP) into pyridoxal 5'-phosphate (PLP). The protein is Pyridoxine/pyridoxamine 5'-phosphate oxidase of Paraburkholderia phytofirmans (strain DSM 17436 / LMG 22146 / PsJN) (Burkholderia phytofirmans).